Reading from the N-terminus, the 281-residue chain is D-arabinitol 2-dehydrogenase [ribulose-forming] (281 aa).

The NADP(+) site is built by leucine 31 and asparagine 52. Serine 169 serves as the catalytic Proton donor. NADP(+)-binding residues include tyrosine 184, lysine 188, isoleucine 217, and threonine 219. Tyrosine 184 functions as the Proton acceptor in the catalytic mechanism. Catalysis depends on lysine 188, which acts as the Lowers pKa of active site Tyr.

It belongs to the short-chain dehydrogenases/reductases (SDR) family.

It carries out the reaction D-arabinitol + NAD(+) = D-ribulose + NADH + H(+). It participates in carbohydrate metabolism; D-arabinitol metabolism. The chain is D-arabinitol 2-dehydrogenase [ribulose-forming] (ARD1) from Candida albicans (strain WO-1) (Yeast).